A 125-amino-acid chain; its full sequence is Glycoprotein hormones alpha chain (125 aa).

The signal sequence occupies residues 1–30 (MVSAVTTMGCMKAAGVSLLLLYFLLNAADS). 5 disulfide bridges follow: C41–C64, C44–C93, C61–C114, C65–C116, and C92–C119. N-linked (GlcNAc...) asparagine glycosylation is found at N85 and N110.

Belongs to the glycoprotein hormones subunit alpha family. As to quaternary structure, heterodimer. Glycoprotein hormones are heterodimers composed of a common alpha chain described here and a unique beta chain which confers their biological specificity to the different hormones.

The protein localises to the secreted. Functionally, shared alpha chain of heterodimeric glycoprotein hormones. These hormones bind specific receptors on target cells that in turn activate downstream signaling pathways. Involved in gametogenesis and steroidogenesis. The chain is Glycoprotein hormones alpha chain (cga) from Fundulus heteroclitus (Killifish).